We begin with the raw amino-acid sequence, 180 residues long: Large ribosomal subunit protein uL5 (180 aa).

The protein belongs to the universal ribosomal protein uL5 family. Part of the 50S ribosomal subunit; part of the 5S rRNA/L5/L18/L25 subcomplex. Contacts the 5S rRNA and the P site tRNA. Forms a bridge to the 30S subunit in the 70S ribosome.

Its function is as follows. This is one of the proteins that bind and probably mediate the attachment of the 5S RNA into the large ribosomal subunit, where it forms part of the central protuberance. In the 70S ribosome it contacts protein S13 of the 30S subunit (bridge B1b), connecting the 2 subunits; this bridge is implicated in subunit movement. Contacts the P site tRNA; the 5S rRNA and some of its associated proteins might help stabilize positioning of ribosome-bound tRNAs. This Limosilactobacillus reuteri (strain DSM 20016) (Lactobacillus reuteri) protein is Large ribosomal subunit protein uL5.